The sequence spans 650 residues: MYYGISQFSEAYNKILRNSSSHSSCQLVIFVSCLNIDALCATKMLSLLFKKQLVQSQIVPIFGYSELRRHYSQLDDNINSLLLVGFGGVIDLEAFLEIDPQEYVIDTDEKSGEQSFRRDIYVLDAHRPWNLDNIFGSQIIQCFDDGTVDDTLGEQKEAYYKLLELDEESGDDELSGDENDNNGGDDEATDADEVTDEDEEDEDETISNKRGNSSIGPNDLSKRKQRKKQIHEYEGVLEEYYSQGTTVVNSISAQIYSLLSAIGETNLSNLWLNILGTTSLDIAYAQVYNRLYPLLQDEVKRLTPSSRNSVKTPDTLTLNIQPDYYLFLLRHSSLYDSFYYSNYVNAKLSLWNENGKKRLHKMFARMGIPLSTAQETWLYMDHSIKRELGIIFDKNLDRYGLQDIIRDGFVRTLGYRGSISASEFVEALTALLEVGNSTDKDSVKINNDNNDDTDGEEEEDNSAQKLTNLRKRWVSNFWLSWDALDDRKVELLNRGIQLAQDLQRAIFNTGVAILEKKLIKHLRIYRLCVLQDGPDLDLYRNPLTLLRLGNWLIECCAESEDKQLLPMVLASIDENTDTYLVAGLTPRYPRGLDTIHTKKPILNNFSMAFQQITAETDAKVRIDNFESSIIEIRREDLSPFLEKLTLSGLL.

Acidic residues-rich tracts occupy residues 168–205 and 449–461; these read ESGDDELSGDENDNNGGDDEATDADEVTDEDEEDEDET and NNDDTDGEEEEDN. Disordered stretches follow at residues 168–227 and 442–462; these read ESGD…KQRK and SVKINNDNNDDTDGEEEEDNS. Position 453 is a phosphothreonine (threonine 453).

The protein belongs to the CDC45 family. In terms of assembly, assembles into a complex with MCM5/CDC46. Interacts with MCM10.

Its subcellular location is the nucleus. Its function is as follows. Required for initiation of chromosomal DNA replication. Acts at the origin of replication. Also has a role in minichromosome maintenance. This is Cell division control protein 45 (CDC45) from Saccharomyces cerevisiae (strain ATCC 204508 / S288c) (Baker's yeast).